The sequence spans 54 residues: Conotoxin Cal6.17 (54 aa).

The signal sequence occupies residues 1–19 (MSGTGVLLLTLLLLVTMAT). Cystine bridges form between Cys24–Cys39, Cys32–Cys49, and Cys38–Cys53.

Expressed by the venom duct.

It is found in the secreted. In terms of biological role, probable neurotoxin. The chain is Conotoxin Cal6.17 from Californiconus californicus (California cone).